The sequence spans 473 residues: Photosystem II CP43 reaction center protein (473 aa).

Residues 1-14 (MKTLYSLRRFYPVE) constitute a propeptide that is removed on maturation. Threonine 15 carries the N-acetylthreonine modification. The residue at position 15 (threonine 15) is a Phosphothreonine. 5 helical membrane passes run 69-93 (LFEVAHFVPEKPMYEQGLILLPHLA), 134-155 (LLGPETLEESFPFFGYVWKDRN), 178-200 (KALYFGGVYDTWAPGGGDVRKIT), 255-275 (KPFAWARRAFVWSGEAYLSYS), and 291-312 (WFNNTAYPSEFYGPTGPEASQA). Glutamate 367 contributes to the [CaMn4O5] cluster binding site. The helical transmembrane segment at 447–471 (RARAAAAGFEKGIDRDLEPVLSMTP) threads the bilayer.

The protein belongs to the PsbB/PsbC family. PsbC subfamily. PSII is composed of 1 copy each of membrane proteins PsbA, PsbB, PsbC, PsbD, PsbE, PsbF, PsbH, PsbI, PsbJ, PsbK, PsbL, PsbM, PsbT, PsbX, PsbY, PsbZ, Psb30/Ycf12, at least 3 peripheral proteins of the oxygen-evolving complex and a large number of cofactors. It forms dimeric complexes. Requires Binds multiple chlorophylls and provides some of the ligands for the Ca-4Mn-5O cluster of the oxygen-evolving complex. It may also provide a ligand for a Cl- that is required for oxygen evolution. PSII binds additional chlorophylls, carotenoids and specific lipids. as cofactor.

It localises to the plastid. It is found in the chloroplast thylakoid membrane. One of the components of the core complex of photosystem II (PSII). It binds chlorophyll and helps catalyze the primary light-induced photochemical processes of PSII. PSII is a light-driven water:plastoquinone oxidoreductase, using light energy to abstract electrons from H(2)O, generating O(2) and a proton gradient subsequently used for ATP formation. This is Photosystem II CP43 reaction center protein from Phalaenopsis aphrodite subsp. formosana (Moth orchid).